The chain runs to 483 residues: RNA-binding protein Nova-1 (483 aa).

The segment at 1–44 (MMAAAPIQQNGTHTGVPIDLDPPDSRKRPLEAPPEAGSTKRTNT) is disordered. A Bipartite nuclear localization signal motif is present at residues 27 to 43 (KRPLEAPPEAGSTKRTN). 3 KH domains span residues 49 to 116 (QYFL…HGFI), 147 to 213 (IKQV…VELI), and 397 to 464 (KDVV…QYLI). The tract at residues 395–479 (GSKDVVEIAV…YEQGVRAANP (85 aa)) is required for RNA binding.

Interacts with PTBP2; the interaction is direct.

It localises to the nucleus. Its function is as follows. Functions to regulate alternative splicing in neurons by binding pre-mRNA in a sequence-specific manner to activate exon inclusion or exclusion. It binds specifically to the sequences 5'-YCAY-3' and regulates splicing in only a subset of regulated exons. Binding to an exonic 5'-YCAY-3' cluster changes the protein complexes assembled on pre-mRNA, blocking U1 snRNP binding and exon inclusion, whereas binding to an intronic 5'-YCAY-3' cluster enhances spliceosome assembly and exon inclusion. Binding to 5'-YCAY-3' clusters results in a local and asymmetric action to regulate spliceosome assembly and alternative splicing in neurons. Binding to an exonic 5'-YCAY-3' cluster changed the protein complexes assembled on pre-mRNA, blocking U1 snRNP (small nuclear ribonucleoprotein) binding and exon inclusion, whereas binding to an intronic 5'-YCAY-3' cluster enhanced spliceosome assembly and exon inclusion. With NOVA1, they perform unique biological functions in different brain areas and cell types. Autoregulates its own expression by acting as a splicing repressor. Acts to activate the inclusion of exon E3A in the glycine receptor alpha-2 chain and of exon E9 in gamma-aminobutyric-acid receptor gamma-2 subunit via a distal downstream UCAU-rich intronic splicing enhancer. Acts to regulate a novel glycine receptor alpha-2 chain splice variant (alpha-2N) in developing spinal cord. The chain is RNA-binding protein Nova-1 (NOVA1) from Macaca fascicularis (Crab-eating macaque).